We begin with the raw amino-acid sequence, 355 residues long: Tabersonine 16-O-methyltransferase (355 aa).

S-adenosyl-L-methionine is bound by residues 198-201, Asp222, 222-223, 242-243, and Lys256; these read IGGG, DL, and DM. The Proton acceptor role is filled by His260.

This sequence belongs to the class I-like SAM-binding methyltransferase superfamily. Cation-independent O-methyltransferase family. COMT subfamily. Homodimer. In terms of tissue distribution, expressed in leaves and flowers. Detected in stems and roots. In leaves, expressed in epidermal cells.

The protein resides in the cytoplasm. It catalyses the reaction 16-hydroxytabersonine + S-adenosyl-L-methionine = 16-methoxytabersonine + S-adenosyl-L-homocysteine + H(+). Its pathway is alkaloid biosynthesis; vindoline biosynthesis. 16-O-methyltransferase involved in the biosynthesis of vindoline. Highly specific for 16-hydroxytabersonine. No activity with tabersonine, 3-hydroxytyramine, 4-hydroxytyramine, 5-hydroxytryptamine (5HT), 2,3-dihydro-3-hydroxytabersonine, lochnericine, hoerhammericine, 16-hydroxy-2,3-dihydro-3-hydroxytabersonine, 16-hydroxylochnericine, 16-hydroxyhoerhammericine, quercetin, kaempferol and caffeic acid as substrates. This Catharanthus roseus (Madagascar periwinkle) protein is Tabersonine 16-O-methyltransferase.